The primary structure comprises 36 residues: uncharacterized protein (36 aa).

This is an uncharacterized protein from Saccharomyces cerevisiae (strain ATCC 204508 / S288c) (Baker's yeast).